The following is a 253-amino-acid chain: Imidazole glycerol phosphate synthase subunit HisF (253 aa).

Residues aspartate 11 and aspartate 130 contribute to the active site.

This sequence belongs to the HisA/HisF family. Heterodimer of HisH and HisF.

It is found in the cytoplasm. It carries out the reaction 5-[(5-phospho-1-deoxy-D-ribulos-1-ylimino)methylamino]-1-(5-phospho-beta-D-ribosyl)imidazole-4-carboxamide + L-glutamine = D-erythro-1-(imidazol-4-yl)glycerol 3-phosphate + 5-amino-1-(5-phospho-beta-D-ribosyl)imidazole-4-carboxamide + L-glutamate + H(+). It functions in the pathway amino-acid biosynthesis; L-histidine biosynthesis; L-histidine from 5-phospho-alpha-D-ribose 1-diphosphate: step 5/9. In terms of biological role, IGPS catalyzes the conversion of PRFAR and glutamine to IGP, AICAR and glutamate. The HisF subunit catalyzes the cyclization activity that produces IGP and AICAR from PRFAR using the ammonia provided by the HisH subunit. The polypeptide is Imidazole glycerol phosphate synthase subunit HisF (Geotalea uraniireducens (strain Rf4) (Geobacter uraniireducens)).